Consider the following 98-residue polypeptide: METRKYEITYIIRPDIEESAKSELVDRFDKILADNGATIADSKDWSTRRFAYPIAKYTEGTYHVVNLTTDSDQALNEFDRLAKFSDDILRHMIVKLDA.

The protein belongs to the bacterial ribosomal protein bS6 family.

Its function is as follows. Binds together with bS18 to 16S ribosomal RNA. This is Small ribosomal subunit protein bS6 from Limosilactobacillus reuteri (strain DSM 20016) (Lactobacillus reuteri).